Reading from the N-terminus, the 269-residue chain is Tryptophan synthase alpha chain (269 aa).

Catalysis depends on proton acceptor residues glutamate 50 and aspartate 61.

It belongs to the TrpA family. Tetramer of two alpha and two beta chains.

The enzyme catalyses (1S,2R)-1-C-(indol-3-yl)glycerol 3-phosphate + L-serine = D-glyceraldehyde 3-phosphate + L-tryptophan + H2O. Its pathway is amino-acid biosynthesis; L-tryptophan biosynthesis; L-tryptophan from chorismate: step 5/5. The alpha subunit is responsible for the aldol cleavage of indoleglycerol phosphate to indole and glyceraldehyde 3-phosphate. This Francisella tularensis subsp. tularensis (strain WY96-3418) protein is Tryptophan synthase alpha chain.